A 751-amino-acid chain; its full sequence is Semaphorin-3C (751 aa).

The signal sequence occupies residues 1–20; that stretch reads MAFRAICVLVGVFICSICVR. One can recognise a Sema domain in the interval 28–511; that stretch reads RVYLTFDELR…SNEGVSQVSL (484 aa). A glycan (N-linked (GlcNAc...) asparagine) is linked at asparagine 81. A disulfide bridge connects residues cysteine 101 and cysteine 112. Asparagine 123 carries an N-linked (GlcNAc...) asparagine glycan. An intrachain disulfide couples cysteine 130 to cysteine 139. Residues asparagine 252 and asparagine 268 are each glycosylated (N-linked (GlcNAc...) asparagine). Cystine bridges form between cysteine 266-cysteine 378 and cysteine 290-cysteine 338. Asparagine 465 carries an N-linked (GlcNAc...) asparagine glycan. A disulfide bond links cysteine 514 and cysteine 532. In terms of domain architecture, Ig-like C2-type spans 571–655; the sequence is AYRNAAEIVQ…TENSFKQTIA (85 aa). 2 N-linked (GlcNAc...) asparagine glycosylation sites follow: asparagine 585 and asparagine 586. A disulfide bond links cysteine 643 and cysteine 709.

This sequence belongs to the semaphorin family. As to quaternary structure, interacts with PLXND1.

It is found in the secreted. Functionally, binds to plexin family members and plays an important role in the regulation of developmental processes. Required for normal cardiovascular development during embryogenesis. Functions as attractant for growing axons, and thereby plays an important role in axon growth and axon guidance. The protein is Semaphorin-3C (Sema3c) of Mus musculus (Mouse).